The following is a 148-amino-acid chain: uncharacterized protein (148 aa).

The span at 65 to 79 shows a compositional bias: low complexity; sequence VDSTPSVDSTGSTSD. The disordered stretch occupies residues 65-85; it reads VDSTPSVDSTGSTSDVVDDRG.

This is an uncharacterized protein from Saccharomyces cerevisiae (strain ATCC 204508 / S288c) (Baker's yeast).